The sequence spans 165 residues: SsrA-binding protein (165 aa).

The segment at 141 to 165 (KLHDKRENEKRKQSEREVKSALARY) is disordered. The span at 144-159 (DKRENEKRKQSEREVK) shows a compositional bias: basic and acidic residues.

It belongs to the SmpB family.

The protein localises to the cytoplasm. In terms of biological role, required for rescue of stalled ribosomes mediated by trans-translation. Binds to transfer-messenger RNA (tmRNA), required for stable association of tmRNA with ribosomes. tmRNA and SmpB together mimic tRNA shape, replacing the anticodon stem-loop with SmpB. tmRNA is encoded by the ssrA gene; the 2 termini fold to resemble tRNA(Ala) and it encodes a 'tag peptide', a short internal open reading frame. During trans-translation Ala-aminoacylated tmRNA acts like a tRNA, entering the A-site of stalled ribosomes, displacing the stalled mRNA. The ribosome then switches to translate the ORF on the tmRNA; the nascent peptide is terminated with the 'tag peptide' encoded by the tmRNA and targeted for degradation. The ribosome is freed to recommence translation, which seems to be the essential function of trans-translation. The chain is SsrA-binding protein from Prochlorococcus marinus (strain SARG / CCMP1375 / SS120).